The sequence spans 274 residues: Proteasome subunit beta (274 aa).

Residues 1–52 (MPDPTGVAGRLPAVFMTPGTSSFTDFLSVAAPDLLPGARGPLPAPVTDAAHG) constitute a propeptide, removed in mature form; by autocatalysis. Thr-53 serves as the catalytic Nucleophile.

This sequence belongs to the peptidase T1B family. As to quaternary structure, the 20S proteasome core is composed of 14 alpha and 14 beta subunits that assemble into four stacked heptameric rings, resulting in a barrel-shaped structure. The two inner rings, each composed of seven catalytic beta subunits, are sandwiched by two outer rings, each composed of seven alpha subunits. The catalytic chamber with the active sites is on the inside of the barrel. Has a gated structure, the ends of the cylinder being occluded by the N-termini of the alpha-subunits. Is capped by the proteasome-associated ATPase, ARC.

It is found in the cytoplasm. It catalyses the reaction Cleavage of peptide bonds with very broad specificity.. It participates in protein degradation; proteasomal Pup-dependent pathway. Its activity is regulated as follows. The formation of the proteasomal ATPase ARC-20S proteasome complex, likely via the docking of the C-termini of ARC into the intersubunit pockets in the alpha-rings, may trigger opening of the gate for substrate entry. Interconversion between the open-gate and close-gate conformations leads to a dynamic regulation of the 20S proteasome proteolysis activity. In terms of biological role, component of the proteasome core, a large protease complex with broad specificity involved in protein degradation. This Parafrankia sp. (strain EAN1pec) protein is Proteasome subunit beta.